Consider the following 147-residue polypeptide: Lysozyme C (147 aa).

A signal peptide spans 1–18 (MRSLLVLVLCFLPLAALG). Residues 19-147 (KVYGRCELAA…VNAWIRGCRL (129 aa)) enclose the C-type lysozyme domain. Cystine bridges form between cysteine 24-cysteine 145, cysteine 48-cysteine 133, cysteine 82-cysteine 98, and cysteine 94-cysteine 112. Residues glutamate 53 and aspartate 70 contribute to the active site.

It belongs to the glycosyl hydrolase 22 family. As to quaternary structure, monomer.

Its subcellular location is the secreted. It carries out the reaction Hydrolysis of (1-&gt;4)-beta-linkages between N-acetylmuramic acid and N-acetyl-D-glucosamine residues in a peptidoglycan and between N-acetyl-D-glucosamine residues in chitodextrins.. Functionally, lysozymes have primarily a bacteriolytic function; those in tissues and body fluids are associated with the monocyte-macrophage system and enhance the activity of immunoagents. This is Lysozyme C (LYZ) from Coturnix japonica (Japanese quail).